Here is a 542-residue protein sequence, read N- to C-terminus: MSTSSNTSGECSPFSITDSIVVQATDDNADKILQEVDLSDPNIDKNDTFELRQQVSIKESPLYYLRDIPYSAYTSFQVSLIFLIVIYNGFLGPLAGNVFIPALPLLQKEFNVSETTINATVSVFMATFSISPLFWGALADKGGRKILYIISISLMVIINILLASVPKKIGSLIFLRIIQAFASSSVISLGAGTVADLTPPKDRGKAMAYFMLGPNLGPILAPIIAGLILLDNNNWRWLFGFLCIVSGLGLIMVILLLPETLRCIVGNGDRQWENWSQNENDMSTQPVDFSSPISRWSFVSDIGFLNPITQDSIFKGLYPHPPKFSVWTYLRIMTFPPVILTSIANALLFCTYYSISVTLSHFLATEYSYSNLKIGACYVCPGVCMLLGSQIGGHLSDSMRKSWKKENYNTEYPLEFRLILTVCGVLLAIGGSIGYGWCIQFHYHISAVLVFAGLMAFGLTWCNNTIMTYLSELLSLRVSSAIAVSSFFRNIAAAISSALIAKLCQKMGIGFCFLGLGLINLVSLFSILVLINNRNKWVKDSF.

N6 and N46 each carry an N-linked (GlcNAc...) asparagine glycan. The chain crosses the membrane as a helical span at residues 80–100 (LIFLIVIYNGFLGPLAGNVFI). Residues N111 and N118 are each glycosylated (N-linked (GlcNAc...) asparagine). 5 helical membrane-spanning segments follow: residues 119–139 (ATVS…GALA), 146–166 (ILYI…ASVP), 169–189 (IGSL…VISL), 210–230 (FMLG…LILL), and 237–257 (WLFG…ILLL). N-linked (GlcNAc...) asparagine glycosylation occurs at N274. Transmembrane regions (helical) follow at residues 332 to 352 (IMTF…FCTY), 374 to 394 (IGAC…IGGH), 419 to 439 (ILTV…GWCI), and 441 to 461 (FHYH…GLTW). The N-linked (GlcNAc...) asparagine glycan is linked to N463. The next 2 helical transmembrane spans lie at 481–501 (AIAV…ALIA) and 511–531 (FCFL…LVLI).

This sequence belongs to the major facilitator superfamily. CAR1 family.

Its subcellular location is the cell membrane. Plasma membrane acetic acid exporter, relieving the stress induced upon cells within hemocytes, and thus enabling increased proliferation and virulence against Galleria mellonella larvae. Confers resistance to weak acid and oxidative stress, but not to antifungal drugs. The protein is Multidrug transporter DTR1 of Candida glabrata (strain ATCC 2001 / BCRC 20586 / JCM 3761 / NBRC 0622 / NRRL Y-65 / CBS 138) (Yeast).